Consider the following 99-residue polypeptide: MYYRYMIVAILLLLLGVLGIVLNRGHLIIMLMSIELILLAASFLFLINSMITDTLIEQVFTIMVLTVAAAESSIGLAIMVAYYRIKGTIAIKSLNWLRG.

3 helical membrane passes run Tyr-2–Leu-22, Leu-27–Ile-47, and Val-59–Met-79.

The protein belongs to the complex I subunit 4L family.

The protein localises to the mitochondrion membrane. The enzyme catalyses a ubiquinone + NADH + 5 H(+)(in) = a ubiquinol + NAD(+) + 4 H(+)(out). Core subunit of the mitochondrial membrane respiratory chain NADH dehydrogenase (Complex I) that is believed to belong to the minimal assembly required for catalysis. Complex I functions in the transfer of electrons from NADH to the respiratory chain. The immediate electron acceptor for the enzyme is believed to be ubiquinone. In Metridium senile (Brown sea anemone), this protein is NADH-ubiquinone oxidoreductase chain 4L (ND4L).